The primary structure comprises 378 residues: MSHLDNGFRSLTLQRFPATDDVNPLQAWEAADEYLLQQLDDTEIPGPVLILNDAFGALSCALAEHKPYSIGDSYISELATRENLRLNGIDESSVKFLDSTADYPQQPGVVLIKVPKTLALLEQQLRALRKVVTSDTRIIAGAKARDIHTSTLELFEKVLGPTTTTLAWKKARLINCTFNEPPLADAPQTVSWKLEGTDWTIHNHANVFSRTGLDIGARFFMQHLPENLEGEIVDLGCGNGVIGLTLLDKNPQAKVVFVDESPMAVASSRLNVETNMPEALDRSEFMINNALSGVEPFRFNAVLCNPPFHQQHALTDNVAWEMFHYARRCLKINGELYIVANRHLDYFHKLKKIFGNCTTIATNNKFVVLKAVKLGRRR.

It belongs to the methyltransferase superfamily. RlmG family.

It localises to the cytoplasm. The enzyme catalyses guanosine(1835) in 23S rRNA + S-adenosyl-L-methionine = N(2)-methylguanosine(1835) in 23S rRNA + S-adenosyl-L-homocysteine + H(+). Its function is as follows. Specifically methylates the guanine in position 1835 (m2G1835) of 23S rRNA. The polypeptide is Ribosomal RNA large subunit methyltransferase G (Shigella flexneri serotype 5b (strain 8401)).